Here is a 185-residue protein sequence, read N- to C-terminus: Elongation factor P (185 aa).

Belongs to the elongation factor P family.

The protein localises to the cytoplasm. It participates in protein biosynthesis; polypeptide chain elongation. In terms of biological role, involved in peptide bond synthesis. Stimulates efficient translation and peptide-bond synthesis on native or reconstituted 70S ribosomes in vitro. Probably functions indirectly by altering the affinity of the ribosome for aminoacyl-tRNA, thus increasing their reactivity as acceptors for peptidyl transferase. This chain is Elongation factor P, found in Caldanaerobacter subterraneus subsp. tengcongensis (strain DSM 15242 / JCM 11007 / NBRC 100824 / MB4) (Thermoanaerobacter tengcongensis).